A 411-amino-acid chain; its full sequence is NADH-quinone oxidoreductase subunit D 2 (411 aa).

It belongs to the complex I 49 kDa subunit family. In terms of assembly, NDH-1 is composed of 14 different subunits. Subunits NuoB, C, D, E, F, and G constitute the peripheral sector of the complex.

It is found in the cell membrane. It catalyses the reaction a quinone + NADH + 5 H(+)(in) = a quinol + NAD(+) + 4 H(+)(out). Its function is as follows. NDH-1 shuttles electrons from NADH, via FMN and iron-sulfur (Fe-S) centers, to quinones in the respiratory chain. The immediate electron acceptor for the enzyme in this species is believed to be ubiquinone. Couples the redox reaction to proton translocation (for every two electrons transferred, four hydrogen ions are translocated across the cytoplasmic membrane), and thus conserves the redox energy in a proton gradient. In Chloroflexus aurantiacus (strain ATCC 29366 / DSM 635 / J-10-fl), this protein is NADH-quinone oxidoreductase subunit D 2.